The primary structure comprises 77 residues: Acyl carrier protein (77 aa).

The Carrier domain occupies 3–77 (QEIFEKVKKI…GKAVEHIESK (75 aa)). Serine 38 bears the O-(pantetheine 4'-phosphoryl)serine mark.

Belongs to the acyl carrier protein (ACP) family. Post-translationally, 4'-phosphopantetheine is transferred from CoA to a specific serine of apo-ACP by AcpS. This modification is essential for activity because fatty acids are bound in thioester linkage to the sulfhydryl of the prosthetic group.

It is found in the cytoplasm. It functions in the pathway lipid metabolism; fatty acid biosynthesis. Functionally, carrier of the growing fatty acid chain in fatty acid biosynthesis. This is Acyl carrier protein from Synechocystis sp. (strain ATCC 27184 / PCC 6803 / Kazusa).